Here is a 324-residue protein sequence, read N- to C-terminus: 4-hydroxybenzoyl-CoA reductase subunit beta (324 aa).

The 216-residue stretch at 2-217 (NILTDFRTHR…AAIEVPPTGA (216 aa)) folds into the FAD-binding PCMH-type domain. FAD contacts are provided by residues 29-36 (PLGAGTDL), Thr111, Asn115, and Gln118. Residues Cys122, Cys138, Cys146, and Cys155 each contribute to the [4Fe-4S] cluster site. Residues Asp162 and Lys224 each contribute to the FAD site.

In terms of assembly, heterohexamer of two alpha, two beta and two gamma subunits. FAD is required as a cofactor. [4Fe-4S] cluster serves as cofactor.

It carries out the reaction oxidized 2[4Fe-4S]-[ferredoxin] + benzoyl-CoA + H2O = 4-hydroxybenzoyl-CoA + reduced 2[4Fe-4S]-[ferredoxin] + 2 H(+). Its activity is regulated as follows. Inactivated by low concentrations of cyanide in vitro. In terms of biological role, component of a complex that catalyzes the reductive dehydroxylation of 4-hydroxybenzoyl-CoA to benzoyl-CoA. Reaction is not reversible. Is a key enzyme in the anaerobic degradation of phenolic compounds. The chain is 4-hydroxybenzoyl-CoA reductase subunit beta (hcrB) from Thauera aromatica.